The sequence spans 709 residues: Elongation factor G (709 aa).

The tr-type G domain maps to 6–295; that stretch reads KFLRNIGIMA…AVCTYLPSPL (290 aa). Residues 15 to 22, 92 to 96, and 146 to 149 contribute to the GTP site; these read AHIDAGKT, DTPGH, and NKMD.

Belongs to the TRAFAC class translation factor GTPase superfamily. Classic translation factor GTPase family. EF-G/EF-2 subfamily.

Its subcellular location is the cytoplasm. In terms of biological role, catalyzes the GTP-dependent ribosomal translocation step during translation elongation. During this step, the ribosome changes from the pre-translocational (PRE) to the post-translocational (POST) state as the newly formed A-site-bound peptidyl-tRNA and P-site-bound deacylated tRNA move to the P and E sites, respectively. Catalyzes the coordinated movement of the two tRNA molecules, the mRNA and conformational changes in the ribosome. This chain is Elongation factor G, found in Amoebophilus asiaticus (strain 5a2).